The following is a 189-amino-acid chain: Inner membrane-spanning protein YciB (189 aa).

The next 5 membrane-spanning stretches (helical) occupy residues 3–23, 47–67, 76–96, 121–141, and 149–169; these read LLID…WGIY, IEPM…ATLL, WKPT…QLFF, WSWT…AHAF, and FKLF…ALYL.

The protein belongs to the YciB family.

It localises to the cell inner membrane. In terms of biological role, plays a role in cell envelope biogenesis, maintenance of cell envelope integrity and membrane homeostasis. The sequence is that of Inner membrane-spanning protein YciB from Paracidovorax citrulli (strain AAC00-1) (Acidovorax citrulli).